The following is a 580-amino-acid chain: Rap guanine nucleotide exchange factor 5 (580 aa).

Positions 67–200 (DRYVVVSGTP…ELKEFQKILG (134 aa)) constitute an N-terminal Ras-GEF domain. In terms of domain architecture, Ras-GEF spans 344 to 579 (NTWDLALELM…FELSHRLEPR (236 aa)).

In terms of tissue distribution, in the embryo, expressed in young neurons of the developing telencephalon, diencephalon and hindbrain. Not expressed in progenitor cells in the ventricular zone.

The protein resides in the nucleus. Its function is as follows. Guanine nucleotide exchange factor (GEF) for RAP1A, RAP2A and MRAS/M-Ras-GTP. Its association with MRAS inhibits Rap1 activation. This is Rap guanine nucleotide exchange factor 5 (Rapgef5) from Rattus norvegicus (Rat).